The sequence spans 188 residues: Peroxidase B (188 aa).

The protein belongs to the peroxidase family. In terms of processing, partially N-glycosylated.

The protein resides in the secreted. The enzyme catalyses 2 a phenolic donor + H2O2 = 2 a phenolic radical donor + 2 H2O. The sequence is that of Peroxidase B from Aloe vera (Aloe).